The primary structure comprises 99 residues: YcgL domain-containing protein HD_1373 (99 aa).

Residues 8 to 92 (NFCAIYKSMS…PAENLLKQFL (85 aa)) enclose the YcgL domain.

This Haemophilus ducreyi (strain 35000HP / ATCC 700724) protein is YcgL domain-containing protein HD_1373.